We begin with the raw amino-acid sequence, 207 residues long: Protein GrpE (207 aa).

Composition is skewed to basic and acidic residues over residues 1–11 (MEENRDVKNEE) and 57–66 (DLVKNQEEEN). The disordered stretch occupies residues 1–66 (MEENRDVKNE…DLVKNQEEEN (66 aa)).

It belongs to the GrpE family. In terms of assembly, homodimer.

Its subcellular location is the cytoplasm. Participates actively in the response to hyperosmotic and heat shock by preventing the aggregation of stress-denatured proteins, in association with DnaK and GrpE. It is the nucleotide exchange factor for DnaK and may function as a thermosensor. Unfolded proteins bind initially to DnaJ; upon interaction with the DnaJ-bound protein, DnaK hydrolyzes its bound ATP, resulting in the formation of a stable complex. GrpE releases ADP from DnaK; ATP binding to DnaK triggers the release of the substrate protein, thus completing the reaction cycle. Several rounds of ATP-dependent interactions between DnaJ, DnaK and GrpE are required for fully efficient folding. This chain is Protein GrpE, found in Clostridium beijerinckii (strain ATCC 51743 / NCIMB 8052) (Clostridium acetobutylicum).